A 390-amino-acid chain; its full sequence is Elongation factor Tu 2 (390 aa).

Residues 10–201 (KPHVNVGTIG…LDDYVEVPPR (192 aa)) form the tr-type G domain. The interval 19–26 (GHVDHGKT) is G1. GTP is bound at residue 19-26 (GHVDHGKT). Thr26 is a Mg(2+) binding site. Positions 55–59 (GITIA) are G2. Positions 76–79 (DCPG) are G3. Residues 76 to 80 (DCPGH) and 131 to 134 (NKAD) contribute to the GTP site. Residues 131–134 (NKAD) are G4. A G5 region spans residues 168–170 (SAL).

The protein belongs to the TRAFAC class translation factor GTPase superfamily. Classic translation factor GTPase family. EF-Tu/EF-1A subfamily. Monomer.

It localises to the cytoplasm. It carries out the reaction GTP + H2O = GDP + phosphate + H(+). Functionally, GTP hydrolase that promotes the GTP-dependent binding of aminoacyl-tRNA to the A-site of ribosomes during protein biosynthesis. In Wolbachia sp. subsp. Brugia malayi (strain TRS), this protein is Elongation factor Tu 2.